We begin with the raw amino-acid sequence, 252 residues long: 3-deoxy-manno-octulosonate cytidylyltransferase (252 aa).

It belongs to the KdsB family.

The protein localises to the cytoplasm. It catalyses the reaction 3-deoxy-alpha-D-manno-oct-2-ulosonate + CTP = CMP-3-deoxy-beta-D-manno-octulosonate + diphosphate. Its pathway is nucleotide-sugar biosynthesis; CMP-3-deoxy-D-manno-octulosonate biosynthesis; CMP-3-deoxy-D-manno-octulosonate from 3-deoxy-D-manno-octulosonate and CTP: step 1/1. The protein operates within bacterial outer membrane biogenesis; lipopolysaccharide biosynthesis. Functionally, activates KDO (a required 8-carbon sugar) for incorporation into bacterial lipopolysaccharide in Gram-negative bacteria. This chain is 3-deoxy-manno-octulosonate cytidylyltransferase, found in Phocaeicola vulgatus (strain ATCC 8482 / DSM 1447 / JCM 5826 / CCUG 4940 / NBRC 14291 / NCTC 11154) (Bacteroides vulgatus).